An 805-amino-acid chain; its full sequence is Centrosomal protein of 85 kDa-like (805 aa).

2 disordered regions span residues Met-1–Asp-27 and Arg-50–Lys-89. At Ser-15 the chain carries Phosphoserine. Over residues Ala-60–Asp-74 the composition is skewed to polar residues. Ser-207 is subject to Phosphoserine. The stretch at Ser-439 to Thr-682 forms a coiled coil.

It belongs to the CEP85 family. Isoform 1 and isoform 4 are expressed in spleen, lymph, thymus, tonsil and peripheral blood leukocytes, with isoform 1 expressed at higher levels. Isoform 4 is detected in K-562 leukemia cells and in the blood of precursor T lymphoblastic lymphoma (T-ALL) patients.

It is found in the cytoplasm. It localises to the cytoskeleton. The protein resides in the microtubule organizing center. Its subcellular location is the centrosome. Plays an essential role in neuronal cell migration. The sequence is that of Centrosomal protein of 85 kDa-like from Homo sapiens (Human).